The sequence spans 56 residues: Small ribosomal subunit protein uS14A (56 aa).

Zn(2+)-binding residues include C21 and C24. S25 carries the phosphoserine modification. C39 and C42 together coordinate Zn(2+).

It belongs to the universal ribosomal protein uS14 family. In terms of assembly, component of the small ribosomal subunit (SSU). Mature yeast ribosomes consist of a small (40S) and a large (60S) subunit. The 40S small subunit contains 1 molecule of ribosomal RNA (18S rRNA) and 33 different proteins (encoded by 57 genes). The large 60S subunit contains 3 rRNA molecules (25S, 5.8S and 5S rRNA) and 46 different proteins (encoded by 81 genes). It depends on Zn(2+) as a cofactor.

The protein localises to the cytoplasm. Its function is as follows. Component of the ribosome, a large ribonucleoprotein complex responsible for the synthesis of proteins in the cell. The small ribosomal subunit (SSU) binds messenger RNAs (mRNAs) and translates the encoded message by selecting cognate aminoacyl-transfer RNA (tRNA) molecules. The large subunit (LSU) contains the ribosomal catalytic site termed the peptidyl transferase center (PTC), which catalyzes the formation of peptide bonds, thereby polymerizing the amino acids delivered by tRNAs into a polypeptide chain. The nascent polypeptides leave the ribosome through a tunnel in the LSU and interact with protein factors that function in enzymatic processing, targeting, and the membrane insertion of nascent chains at the exit of the ribosomal tunnel. This Saccharomyces cerevisiae (strain ATCC 204508 / S288c) (Baker's yeast) protein is Small ribosomal subunit protein uS14A.